A 146-amino-acid chain; its full sequence is Hemoglobin subunit beta-1 (146 aa).

The Globin domain maps to 2-146 (EWTDKERAII…VVSALGKQYH (145 aa)). Positions 63 and 92 each coordinate heme b.

This sequence belongs to the globin family. Hb 1 is a heterotetramer of two alpha-1 and two beta-1 chains. As to expression, red blood cells.

In terms of biological role, involved in oxygen transport from gills to the various peripheral tissues. The protein is Hemoglobin subunit beta-1 (hbb1) of Gobionotothen gibberifrons (Humped rockcod).